The following is a 562-amino-acid chain: Formate--tetrahydrofolate ligase (562 aa).

71–78 (TPAGEGKS) contacts ATP.

The protein belongs to the formate--tetrahydrofolate ligase family.

The catalysed reaction is (6S)-5,6,7,8-tetrahydrofolate + formate + ATP = (6R)-10-formyltetrahydrofolate + ADP + phosphate. Its pathway is one-carbon metabolism; tetrahydrofolate interconversion. The polypeptide is Formate--tetrahydrofolate ligase (Bacillus cereus (strain G9842)).